A 334-amino-acid chain; its full sequence is DNA-directed RNA polymerase subunit alpha (334 aa).

Positions 1-234 (MQRSVHELLT…QQLAVFVDFD (234 aa)) are alpha N-terminal domain (alpha-NTD). Residues 248 to 334 (IDPILLRPVD…LRGDDRVLGG (87 aa)) form an alpha C-terminal domain (alpha-CTD) region.

It belongs to the RNA polymerase alpha chain family. Homodimer. The RNAP catalytic core consists of 2 alpha, 1 beta, 1 beta' and 1 omega subunit. When a sigma factor is associated with the core the holoenzyme is formed, which can initiate transcription.

It catalyses the reaction RNA(n) + a ribonucleoside 5'-triphosphate = RNA(n+1) + diphosphate. DNA-dependent RNA polymerase catalyzes the transcription of DNA into RNA using the four ribonucleoside triphosphates as substrates. This is DNA-directed RNA polymerase subunit alpha from Marinobacter nauticus (strain ATCC 700491 / DSM 11845 / VT8) (Marinobacter aquaeolei).